We begin with the raw amino-acid sequence, 101 residues long: Small ribosomal subunit protein bS18c (101 aa).

It belongs to the bacterial ribosomal protein bS18 family. In terms of assembly, part of the 30S ribosomal subunit.

The protein localises to the plastid. Its subcellular location is the chloroplast. The chain is Small ribosomal subunit protein bS18c from Gossypium barbadense (Sea Island cotton).